A 1179-amino-acid chain; its full sequence is uncharacterized protein (1179 aa).

This is an uncharacterized protein from Ictaluridae (bullhead catfishes).